Reading from the N-terminus, the 207-residue chain is Holliday junction branch migration complex subunit RuvA (207 aa).

Residues 1 to 63 form a domain I region; that stretch reads MISSLRGTVL…EDSLQLFGFS (63 aa). A domain II region spans residues 64–142; the sequence is GLEQLQVFEL…ACRRPSAPSA (79 aa). The interval 142 to 146 is flexible linker; it reads ARRPS. Positions 147-207 are domain III; it reads APSSVSDSVL…RLGPANQAAR (61 aa).

Belongs to the RuvA family. Homotetramer. Forms an RuvA(8)-RuvB(12)-Holliday junction (HJ) complex. HJ DNA is sandwiched between 2 RuvA tetramers; dsDNA enters through RuvA and exits via RuvB. An RuvB hexamer assembles on each DNA strand where it exits the tetramer. Each RuvB hexamer is contacted by two RuvA subunits (via domain III) on 2 adjacent RuvB subunits; this complex drives branch migration. In the full resolvosome a probable DNA-RuvA(4)-RuvB(12)-RuvC(2) complex forms which resolves the HJ.

The protein resides in the cytoplasm. The RuvA-RuvB-RuvC complex processes Holliday junction (HJ) DNA during genetic recombination and DNA repair, while the RuvA-RuvB complex plays an important role in the rescue of blocked DNA replication forks via replication fork reversal (RFR). RuvA specifically binds to HJ cruciform DNA, conferring on it an open structure. The RuvB hexamer acts as an ATP-dependent pump, pulling dsDNA into and through the RuvAB complex. HJ branch migration allows RuvC to scan DNA until it finds its consensus sequence, where it cleaves and resolves the cruciform DNA. The protein is Holliday junction branch migration complex subunit RuvA of Leifsonia xyli subsp. xyli (strain CTCB07).